A 39-amino-acid chain; its full sequence is Natriuretic peptide HsNP-a (39 aa).

Positions 1–8 (SGSKTAKI) are excised as a propeptide. A disulfide bridge links Cys-12 with Cys-28.

This sequence belongs to the natriuretic peptide family. As to expression, expressed by the venom gland.

Its subcellular location is the secreted. Functionally, snake venom natriuretic peptide that targets both NPR1 and NPR2. Exhibits hypotensive and vasodepressor activities. In Hoplocephalus stephensii (Stephens's banded snake), this protein is Natriuretic peptide HsNP-a.